Reading from the N-terminus, the 291-residue chain is Phosphatidylcholine-sterol acyltransferase (291 aa).

The N-linked (GlcNAc...) asparagine glycan is linked to Asn28. Ser125 serves as the catalytic Nucleophile. N-linked (GlcNAc...) asparagine glycosylation occurs at Asn179. Cys220 and Cys263 are oxidised to a cystine. Asp252 (charge relay system) is an active-site residue. Asn280 is a glycosylation site (N-linked (GlcNAc...) asparagine).

This sequence belongs to the AB hydrolase superfamily. Lipase family.

The protein localises to the secreted. The catalysed reaction is a sterol + a 1,2-diacyl-sn-glycero-3-phosphocholine = a sterol ester + a 1-acyl-sn-glycero-3-phosphocholine. With respect to regulation, APOA1 is the most potent activator in plasma. Also activated by APOE, APOC1 and APOA4. Central enzyme in the extracellular metabolism of plasma lipoproteins. Synthesized mainly in the liver and secreted into plasma where it converts cholesterol and phosphatidylcholines (lecithins) to cholesteryl esters and lysophosphatidylcholines on the surface of high and low density lipoproteins (HDLs and LDLs). The cholesterol ester is then transported back to the liver. Has a preference for plasma 16:0-18:2 or 18:O-18:2 phosphatidylcholines. Also produced in the brain by primary astrocytes, and esterifies free cholesterol on nascent APOE-containing lipoproteins secreted from glia and influences cerebral spinal fluid (CSF) APOE- and APOA1 levels. Together with APOE and the cholesterol transporter ABCA1, plays a key role in the maturation of glial-derived, nascent lipoproteins. Required for remodeling high-density lipoprotein particles into their spherical forms. The protein is Phosphatidylcholine-sterol acyltransferase (LCAT) of Myodes glareolus (Bank vole).